The chain runs to 35 residues: Alpha-amanitin proprotein 1 (35 aa).

Positions 1–10 (MSDINATRLP) are excised as a propeptide. A (3R,4R)-4,5-dihydroxyisoleucine; in form alpha-amanitin modification is found at isoleucine 11. Residue isoleucine 11 is modified to (3R,4S)-4-hydroxyisoleucine; in form gamma-amanitin. A cross-link (cyclopeptide (Ile-Pro)) is located at residues 11 to 18 (IWGIGCNP). Residues 12–16 (WGIGC) constitute a cross-link (2'-cysteinyl-6'-hydroxytryptophan sulfoxide (Trp-Cys)). Proline 18 carries the 4-hydroxyproline modification. Residues 19-35 (CVGDDVTSVLTRGEALC) constitute a propeptide that is removed on maturation.

This sequence belongs to the MSDIN fungal toxin family. Post-translationally, processed by the macrocyclase-peptidase enzyme POPB to yield a toxic cyclic octapeptide. POPB first removes 10 residues from the N-terminus. Conformational trapping of the remaining peptide forces the enzyme to release this intermediate rather than proceed to macrocyclization. The enzyme rebinds the remaining peptide in a different conformation and catalyzes macrocyclization of the N-terminal 8 residues. Expressed in basidiocarps.

Functionally, major toxin belonging to the bicyclic octapeptides amatoxins that acts by binding non-competitively to RNA polymerase II and greatly slowing the elongation of transcripts from target promoters. This is Alpha-amanitin proprotein 1 from Amanita exitialis (Guangzhou destroying angel).